A 476-amino-acid polypeptide reads, in one-letter code: Bifunctional protein HldE (476 aa).

The ribokinase stretch occupies residues 1-319; that stretch reads MKVSLPAFEK…EALALHHGES (319 aa). 195–198 contacts ATP; sequence NMSE. Residue aspartate 264 is part of the active site. Residues 345 to 476 are cytidylyltransferase; the sequence is MTNGCFDILH…AIIQNIMANQ (132 aa).

In the N-terminal section; belongs to the carbohydrate kinase PfkB family. It in the C-terminal section; belongs to the cytidylyltransferase family. In terms of assembly, homodimer.

The catalysed reaction is D-glycero-beta-D-manno-heptose 7-phosphate + ATP = D-glycero-beta-D-manno-heptose 1,7-bisphosphate + ADP + H(+). The enzyme catalyses D-glycero-beta-D-manno-heptose 1-phosphate + ATP + H(+) = ADP-D-glycero-beta-D-manno-heptose + diphosphate. Its pathway is nucleotide-sugar biosynthesis; ADP-L-glycero-beta-D-manno-heptose biosynthesis; ADP-L-glycero-beta-D-manno-heptose from D-glycero-beta-D-manno-heptose 7-phosphate: step 1/4. The protein operates within nucleotide-sugar biosynthesis; ADP-L-glycero-beta-D-manno-heptose biosynthesis; ADP-L-glycero-beta-D-manno-heptose from D-glycero-beta-D-manno-heptose 7-phosphate: step 3/4. In terms of biological role, catalyzes the phosphorylation of D-glycero-D-manno-heptose 7-phosphate at the C-1 position to selectively form D-glycero-beta-D-manno-heptose-1,7-bisphosphate. Functionally, catalyzes the ADP transfer from ATP to D-glycero-beta-D-manno-heptose 1-phosphate, yielding ADP-D-glycero-beta-D-manno-heptose. The polypeptide is Bifunctional protein HldE (Shewanella baltica (strain OS185)).